The following is a 494-amino-acid chain: Glutamate--tRNA ligase (494 aa).

A 'HIGH' region motif is present at residues 10 to 20; the sequence is PSPTGDPHVGT. Zn(2+)-binding residues include C107, C109, C134, and H136. Positions 251–255 match the 'KMSKS' region motif; the sequence is KLSKR. An ATP-binding site is contributed by K254.

This sequence belongs to the class-I aminoacyl-tRNA synthetase family. Glutamate--tRNA ligase type 1 subfamily. Monomer. Zn(2+) serves as cofactor.

The protein localises to the cytoplasm. It carries out the reaction tRNA(Glu) + L-glutamate + ATP = L-glutamyl-tRNA(Glu) + AMP + diphosphate. In terms of biological role, catalyzes the attachment of glutamate to tRNA(Glu) in a two-step reaction: glutamate is first activated by ATP to form Glu-AMP and then transferred to the acceptor end of tRNA(Glu). The sequence is that of Glutamate--tRNA ligase from Pseudomonas aeruginosa (strain ATCC 15692 / DSM 22644 / CIP 104116 / JCM 14847 / LMG 12228 / 1C / PRS 101 / PAO1).